We begin with the raw amino-acid sequence, 351 residues long: Methionine import ATP-binding protein MetN (351 aa).

In terms of domain architecture, ABC transporter spans 2–241 (IELRNVTKTY…PKTEIAKKFT (240 aa)). Position 38-45 (38-45 (GKSGAGKS)) interacts with ATP.

This sequence belongs to the ABC transporter superfamily. Methionine importer (TC 3.A.1.24) family. In terms of assembly, the complex is composed of two ATP-binding proteins (MetN), two transmembrane proteins (MetI) and a solute-binding protein (MetQ).

It localises to the cell inner membrane. The enzyme catalyses L-methionine(out) + ATP + H2O = L-methionine(in) + ADP + phosphate + H(+). The catalysed reaction is D-methionine(out) + ATP + H2O = D-methionine(in) + ADP + phosphate + H(+). Its function is as follows. Part of the ABC transporter complex MetNIQ involved in methionine import. Responsible for energy coupling to the transport system. The protein is Methionine import ATP-binding protein MetN of Coxiella burnetii (strain RSA 493 / Nine Mile phase I).